The following is a 548-amino-acid chain: (2S)-methylsuccinyl-CoA dehydrogenase (548 aa).

Residues 282-291 (AVFTEPNTGS) and 315-317 (WIT) each bind FAD. Serine 291 is a substrate binding site. Substrate is bound at residue 409–412 (ESAR). FAD is bound by residues arginine 437 and 505–509 (QIHGG). Glutamate 532 (proton acceptor) is an active-site residue. An FAD-binding site is contributed by 534-536 (AAE).

This sequence belongs to the acyl-CoA dehydrogenase family. As to quaternary structure, homodimer. Requires FAD as cofactor.

The catalysed reaction is (2S)-methylsuccinyl-CoA + oxidized [electron-transfer flavoprotein] + H(+) = 2-methylfumaryl-CoA + reduced [electron-transfer flavoprotein]. In terms of biological role, involved in the ethylmalonyl-CoA pathway, a new acetyl-CoA assimilation strategy that operates in a number of bacteria and replaces the glyoxylate cycle. Catalyzes the oxidation of (2S)-methylsuccinyl-CoA to yield mesaconyl-(C1)-CoA. Highly specific for (S)-methylsuccinyl-CoA. This is (2S)-methylsuccinyl-CoA dehydrogenase from Cereibacter sphaeroides (Rhodobacter sphaeroides).